We begin with the raw amino-acid sequence, 822 residues long: MCHNSVRSGNKAGFLGIKFGSALLSIATGAIAIALLCKFHDHEAVLIVIVCSTLLYGIPSLISFITETVFAPSKFHIGYFYNVLNFALPLITMGCTVDYFHNTLRSPISVQSESHRVYITTLDSLLIFTLFINGIQLGFFLKDGNANNFGSSSNNISTDQYDKEANAVENGRFVPLKNSSQTLTPDLELLHGSPKSMNGVAWLINELSTNSNTNANKTISSDENSNSSVIRHKLGPISTSKCPKKPSHSHFSKLKKYNSFFLGPKENRYKRNTQQATKVPTEKKSNHRSSQYVSRLSTISDISKSFLNFLALNEKNGNSTSTARTPSEGRVSIIINEGNNTLKYKTPHDSHTIDSPNLELEREAIGRINSALLPACLRVTDKMISPQQSTQNEDSYQATPLIPQVEVDDDFYVGDILMTNELQDIPQVPRISSDIEDDFEQQYTKHVDLPARVTLEMWEKDQEKILQKVTTNRDKSKLLPPFRFTSESDMDPSTSTELEVELHAQNNFSFPFKSAGLQIATSDQFNQQEFKTSDTISELDEYLHDPSIQEEDASQLIESSLNQNNLSSTTIDNGPKDMSRFSTRHSPTKSIISMISGSGSVKHQHSHSTLSNFFTGHSRNNSQINQLLQGSSSNMMSNTSPHSSPTKSLRMRFGKKLSLSNISDTMSPYEGSTTDPINYSFGHGHNKNQSIDFSYVRTLQSSHSPTKSTSGNSRRDSLNNDRTQSTVNERALRTASTLFYLQHNNATCTLNGEEPVLDTPQSIQSSSSGSEQESAGSGSGYPEVVFSEYDREKWNVLRNLKEIAPEKTIESGPVEELVSPSK.

Over 1–13 the chain is Cytoplasmic; sequence MCHNSVRSGNKAG. The helical transmembrane segment at 14–34 threads the bilayer; the sequence is FLGIKFGSALLSIATGAIAIA. At 35–44 the chain is on the extracellular side; it reads LLCKFHDHEA. Residues 45–65 traverse the membrane as a helical segment; it reads VLIVIVCSTLLYGIPSLISFI. Residues 66–76 lie on the Cytoplasmic side of the membrane; sequence TETVFAPSKFH. The chain crosses the membrane as a helical span at residues 77-97; sequence IGYFYNVLNFALPLITMGCTV. Residues 98-120 lie on the Extracellular side of the membrane; it reads DYFHNTLRSPISVQSESHRVYIT. Residues 121–141 traverse the membrane as a helical segment; it reads TLDSLLIFTLFINGIQLGFFL. At 142–822 the chain is on the cytoplasmic side; that stretch reads KDGNANNFGS…PVEELVSPSK (681 aa). The disordered stretch occupies residues 271-290; it reads RNTQQATKVPTEKKSNHRSS. Ser690 bears the Phosphoserine mark. The segment covering 698-712 has biased composition (polar residues); it reads TLQSSHSPTKSTSGN. Disordered regions lie at residues 698–728 and 751–783; these read TLQSSHSPTKSTSGNSRRDSLNNDRTQSTVN and NGEEPVLDTPQSIQSSSSGSEQESAGSGSGYPE. The segment covering 761–776 has biased composition (low complexity); it reads QSIQSSSSGSEQESAG.

The protein resides in the membrane. This is an uncharacterized protein from Saccharomyces cerevisiae (strain ATCC 204508 / S288c) (Baker's yeast).